A 738-amino-acid chain; its full sequence is DNA ligase (738 aa).

NAD(+) is bound by residues 48-52 (DVVYD), 97-98 (SL), and E136. K138 functions as the N6-AMP-lysine intermediate in the catalytic mechanism. NAD(+) is bound by residues R159, E196, K356, and K380. The Zn(2+) site is built by C474, C477, C492, and C497. Residues 659 to 738 (QLPQPLAGKT…SQLLELLEET (80 aa)) form the BRCT domain.

The protein belongs to the NAD-dependent DNA ligase family. LigA subfamily. Mg(2+) serves as cofactor. The cofactor is Mn(2+).

The enzyme catalyses NAD(+) + (deoxyribonucleotide)n-3'-hydroxyl + 5'-phospho-(deoxyribonucleotide)m = (deoxyribonucleotide)n+m + AMP + beta-nicotinamide D-nucleotide.. In terms of biological role, DNA ligase that catalyzes the formation of phosphodiester linkages between 5'-phosphoryl and 3'-hydroxyl groups in double-stranded DNA using NAD as a coenzyme and as the energy source for the reaction. It is essential for DNA replication and repair of damaged DNA. This is DNA ligase from Cyanothece sp. (strain PCC 7425 / ATCC 29141).